A 75-amino-acid polypeptide reads, in one-letter code: DNA-directed RNA polymerase subunit Rpo6 (75 aa).

This sequence belongs to the archaeal Rpo6/eukaryotic RPB6 RNA polymerase subunit family. As to quaternary structure, part of the RNA polymerase complex.

It localises to the cytoplasm. The enzyme catalyses RNA(n) + a ribonucleoside 5'-triphosphate = RNA(n+1) + diphosphate. DNA-dependent RNA polymerase (RNAP) catalyzes the transcription of DNA into RNA using the four ribonucleoside triphosphates as substrates. The polypeptide is DNA-directed RNA polymerase subunit Rpo6 (Archaeoglobus fulgidus (strain ATCC 49558 / DSM 4304 / JCM 9628 / NBRC 100126 / VC-16)).